The chain runs to 427 residues: Nucleolar and spindle-associated protein 1 (427 aa).

The disordered stretch occupies residues 41-190 (AHLNPETRKE…LGNNKRTSAT (150 aa)). Residues 43 to 55 (LNPETRKENKNQD) are compositionally biased toward basic and acidic residues. Residues 83 to 96 (TKTRRRRRKKHKTI) are compositionally biased toward basic residues. The segment covering 119–128 (NFQNQENQEN) has biased composition (low complexity). The residue at position 139 (S139) is a Phosphoserine. Positions 159 to 179 (NDIKDSKKPLEKRSLCTDEFS) are enriched in basic and acidic residues. Residues 181–190 (LGNNKRTSAT) show a composition bias toward polar residues. Position 191 is a phosphothreonine (T191). The tract at residues 235 to 312 (IVTPVPPRGR…QAVFRTPKSK (78 aa)) is disordered. The interaction with microtubules stretch occupies residues 243–367 (GRLSVPCTPA…HKGKLKPWGQ (125 aa)). S246 carries the phosphoserine modification. T250 is subject to Phosphothreonine. The span at 252–264 (ARQQCPQGHSATK) shows a compositional bias: polar residues. At S261 the chain carries Phosphoserine. A phosphothreonine mark is found at T323 and T334. Phosphoserine occurs at positions 337 and 348. Residues 354–427 (NYKPHKGKLK…RRNLGVTKAQ (74 aa)) are disordered. Residues 369–375 (KENNSLN) carry the KEN box motif. Residues 393 to 425 (LQTREERWKRQEQERKEKKEKLLEARRNLGVTK) are a coiled coil. Over residues 394 to 419 (QTREERWKRQEQERKEKKEKLLEARR) the composition is skewed to basic and acidic residues.

The protein belongs to the NUSAP family. In terms of assembly, interacts with DNA and microtubules. Microtubule bundling is inhibited by IPO7, KPNA2 and KPNB1 while association with DNA is also inhibited by IPO7 and KPNA2. In terms of processing, ubiquitinated. Ubiquitination by FZR1 may lead to proteasome-dependent degradation of this protein.

Its subcellular location is the cytoplasm. The protein resides in the nucleus. It localises to the nucleolus. The protein localises to the cytoskeleton. It is found in the spindle. Its subcellular location is the chromosome. In terms of biological role, microtubule-associated protein with the capacity to bundle and stabilize microtubules. May associate with chromosomes and promote the organization of mitotic spindle microtubules around them. This is Nucleolar and spindle-associated protein 1 (Nusap1) from Mus musculus (Mouse).